The following is a 307-amino-acid chain: uncharacterized protein (307 aa).

Residues His254–Glu278 are disordered. The span at Ser255 to Asn272 shows a compositional bias: basic residues.

This sequence to yeast YOR062c.

This is an uncharacterized protein from Saccharomyces cerevisiae (strain ATCC 204508 / S288c) (Baker's yeast).